The primary structure comprises 309 residues: NAD kinase (309 aa).

D89 serves as the catalytic Proton acceptor. Residues 89–90, 163–164, H174, R191, D193, and 204–209 each bind NAD(+); these read DG, NE, and TAYALS.

Belongs to the NAD kinase family. Requires a divalent metal cation as cofactor.

It localises to the cytoplasm. The catalysed reaction is NAD(+) + ATP = ADP + NADP(+) + H(+). In terms of biological role, involved in the regulation of the intracellular balance of NAD and NADP, and is a key enzyme in the biosynthesis of NADP. Catalyzes specifically the phosphorylation on 2'-hydroxyl of the adenosine moiety of NAD to yield NADP. In Shewanella baltica (strain OS155 / ATCC BAA-1091), this protein is NAD kinase.